Consider the following 120-residue polypeptide: NAD(P)H-quinone oxidoreductase subunit 3, chloroplastic (120 aa).

3 helical membrane passes run 9–29 (IFWA…LISG), 64–84 (MFAL…PWAM), and 88–108 (VLGV…ILGL).

The protein belongs to the complex I subunit 3 family. As to quaternary structure, NDH is composed of at least 16 different subunits, 5 of which are encoded in the nucleus.

Its subcellular location is the plastid. The protein localises to the chloroplast thylakoid membrane. It carries out the reaction a plastoquinone + NADH + (n+1) H(+)(in) = a plastoquinol + NAD(+) + n H(+)(out). The catalysed reaction is a plastoquinone + NADPH + (n+1) H(+)(in) = a plastoquinol + NADP(+) + n H(+)(out). Functionally, NDH shuttles electrons from NAD(P)H:plastoquinone, via FMN and iron-sulfur (Fe-S) centers, to quinones in the photosynthetic chain and possibly in a chloroplast respiratory chain. The immediate electron acceptor for the enzyme in this species is believed to be plastoquinone. Couples the redox reaction to proton translocation, and thus conserves the redox energy in a proton gradient. The sequence is that of NAD(P)H-quinone oxidoreductase subunit 3, chloroplastic from Aethionema grandiflorum (Persian stone-cress).